A 79-amino-acid polypeptide reads, in one-letter code: Sulfur carrier protein TusA (79 aa).

Residue Cys17 is the Cysteine persulfide intermediate of the active site.

The protein belongs to the sulfur carrier protein TusA family.

Its subcellular location is the cytoplasm. Its function is as follows. Sulfur carrier protein which probably makes part of a sulfur-relay system. The chain is Sulfur carrier protein TusA from Pasteurella multocida (strain Pm70).